Consider the following 148-residue polypeptide: 3-dehydroquinate dehydratase 2 (148 aa).

Catalysis depends on Tyr-24, which acts as the Proton acceptor. Asn-75, His-81, and Asp-88 together coordinate substrate. The active-site Proton donor is His-101. Substrate-binding positions include 102 to 103 (LS) and Arg-112.

This sequence belongs to the type-II 3-dehydroquinase family. As to quaternary structure, homododecamer.

It carries out the reaction 3-dehydroquinate = 3-dehydroshikimate + H2O. It functions in the pathway metabolic intermediate biosynthesis; chorismate biosynthesis; chorismate from D-erythrose 4-phosphate and phosphoenolpyruvate: step 3/7. In terms of biological role, catalyzes a trans-dehydration via an enolate intermediate. This is 3-dehydroquinate dehydratase 2 (aroQ2) from Pseudomonas aeruginosa (strain ATCC 15692 / DSM 22644 / CIP 104116 / JCM 14847 / LMG 12228 / 1C / PRS 101 / PAO1).